We begin with the raw amino-acid sequence, 434 residues long: 5-methylthioadenosine/S-adenosylhomocysteine deaminase (434 aa).

Zn(2+) is bound by residues H66 and H68. Substrate is bound by residues E95, R148, and H188. H215 contributes to the Zn(2+) binding site. Substrate contacts are provided by E218 and D304. D304 is a binding site for Zn(2+).

It belongs to the metallo-dependent hydrolases superfamily. MTA/SAH deaminase family. The cofactor is Zn(2+).

It catalyses the reaction S-adenosyl-L-homocysteine + H2O + H(+) = S-inosyl-L-homocysteine + NH4(+). It carries out the reaction S-methyl-5'-thioadenosine + H2O + H(+) = S-methyl-5'-thioinosine + NH4(+). In terms of biological role, catalyzes the deamination of 5-methylthioadenosine and S-adenosyl-L-homocysteine into 5-methylthioinosine and S-inosyl-L-homocysteine, respectively. Is also able to deaminate adenosine. The chain is 5-methylthioadenosine/S-adenosylhomocysteine deaminase from Shouchella clausii (strain KSM-K16) (Alkalihalobacillus clausii).